Here is a 548-residue protein sequence, read N- to C-terminus: mRNA cleavage and polyadenylation factor CLP1 (548 aa).

Residues E19, K60, and 123–128 contribute to the ATP site; that span reads SSGKTT. The segment covering 437–478 has biased composition (basic and acidic residues); that stretch reads ESEVKEEVKEEKNEKDGEIKQDGEGEKKGEGKGEGEGEGEGK. A disordered region spans residues 437–500; that stretch reads ESEVKEEVKE…DEEEVPFREE (64 aa). Residues 479–494 show a composition bias toward acidic residues; that stretch reads DGEEEGEAEGEDDEEE.

It belongs to the Clp1 family. Clp1 subfamily. Component of a pre-mRNA cleavage factor complex. Interacts directly with PCF11.

It is found in the nucleus. Functionally, required for endonucleolytic cleavage during polyadenylation-dependent pre-mRNA 3'-end formation. The chain is mRNA cleavage and polyadenylation factor CLP1 from Cryptococcus neoformans var. neoformans serotype D (strain JEC21 / ATCC MYA-565) (Filobasidiella neoformans).